The chain runs to 177 residues: MAELSTIARPYAKAAFDFAVEHKAVESWTEMLTFASLVSENESIKPLLNGTLASTQLATLFIKVCGEQVNEQGQNLIKVMAENGRLGILSTVSLLFAEYRNEWAKEVEADVVSATELSSEQQQQISVSLEKRLARKVKLNCSIDASLIGGVIIKSGDLVIDGSVSGKLSRLSEKLQS.

This sequence belongs to the ATPase delta chain family. F-type ATPases have 2 components, F(1) - the catalytic core - and F(0) - the membrane proton channel. F(1) has five subunits: alpha(3), beta(3), gamma(1), delta(1), epsilon(1). F(0) has three main subunits: a(1), b(2) and c(10-14). The alpha and beta chains form an alternating ring which encloses part of the gamma chain. F(1) is attached to F(0) by a central stalk formed by the gamma and epsilon chains, while a peripheral stalk is formed by the delta and b chains.

The protein resides in the cell inner membrane. In terms of biological role, f(1)F(0) ATP synthase produces ATP from ADP in the presence of a proton or sodium gradient. F-type ATPases consist of two structural domains, F(1) containing the extramembraneous catalytic core and F(0) containing the membrane proton channel, linked together by a central stalk and a peripheral stalk. During catalysis, ATP synthesis in the catalytic domain of F(1) is coupled via a rotary mechanism of the central stalk subunits to proton translocation. Its function is as follows. This protein is part of the stalk that links CF(0) to CF(1). It either transmits conformational changes from CF(0) to CF(1) or is implicated in proton conduction. In Shewanella frigidimarina (strain NCIMB 400), this protein is ATP synthase subunit delta.